A 141-amino-acid polypeptide reads, in one-letter code: Small ribosomal subunit protein uS12 (141 aa).

It belongs to the universal ribosomal protein uS12 family. As to quaternary structure, part of the 30S ribosomal subunit.

Its function is as follows. With S4 and S5 plays an important role in translational accuracy. Located at the interface of the 30S and 50S subunits. The protein is Small ribosomal subunit protein uS12 of Methanothermobacter thermautotrophicus (strain ATCC 29096 / DSM 1053 / JCM 10044 / NBRC 100330 / Delta H) (Methanobacterium thermoautotrophicum).